Consider the following 128-residue polypeptide: Small ribosomal subunit protein uS13 (128 aa).

Positions 95–118 (GLPVRGQRTHTNARTRKGPKKGLV) are enriched in basic residues. Positions 95-128 (GLPVRGQRTHTNARTRKGPKKGLVRKAAAPAPKA) are disordered.

This sequence belongs to the universal ribosomal protein uS13 family. In terms of assembly, part of the 30S ribosomal subunit. Forms a loose heterodimer with protein S19. Forms two bridges to the 50S subunit in the 70S ribosome.

Located at the top of the head of the 30S subunit, it contacts several helices of the 16S rRNA. In the 70S ribosome it contacts the 23S rRNA (bridge B1a) and protein L5 of the 50S subunit (bridge B1b), connecting the 2 subunits; these bridges are implicated in subunit movement. Contacts the tRNAs in the A and P-sites. In Anaeromyxobacter sp. (strain K), this protein is Small ribosomal subunit protein uS13.